The sequence spans 563 residues: Membrane protein insertase YidC (563 aa).

The chain crosses the membrane as a helical span at residues 1 to 21 (MDIKRTILIVALAIVTYVGVL). Positions 43–62 (APGIPDTAAGTNGSASADVP) are disordered. 5 consecutive transmembrane segments (helical) span residues 344–364 (LELT…FWLL), 370–390 (ILGN…GLFF), 440–460 (LGGC…YWVL), 471–491 (WILW…PIIM), and 518–538 (PIIF…YWVV).

The protein belongs to the OXA1/ALB3/YidC family. Type 1 subfamily. In terms of assembly, interacts with the Sec translocase complex via SecD. Specifically interacts with transmembrane segments of nascent integral membrane proteins during membrane integration.

Its subcellular location is the cell inner membrane. Required for the insertion and/or proper folding and/or complex formation of integral membrane proteins into the membrane. Involved in integration of membrane proteins that insert both dependently and independently of the Sec translocase complex, as well as at least some lipoproteins. Aids folding of multispanning membrane proteins. In Pseudomonas savastanoi pv. phaseolicola (strain 1448A / Race 6) (Pseudomonas syringae pv. phaseolicola (strain 1448A / Race 6)), this protein is Membrane protein insertase YidC.